Consider the following 223-residue polypeptide: Adapter protein MecA (223 aa).

It belongs to the MecA family. Homodimer.

Functionally, enables the recognition and targeting of unfolded and aggregated proteins to the ClpC protease or to other proteins involved in proteolysis. In Limosilactobacillus reuteri (strain DSM 20016) (Lactobacillus reuteri), this protein is Adapter protein MecA.